Consider the following 507-residue polypeptide: ATP synthase subunit alpha, chloroplastic (507 aa).

170-177 (GDRQTGKA) serves as a coordination point for ATP.

It belongs to the ATPase alpha/beta chains family. F-type ATPases have 2 components, CF(1) - the catalytic core - and CF(0) - the membrane proton channel. CF(1) has five subunits: alpha(3), beta(3), gamma(1), delta(1), epsilon(1). CF(0) has four main subunits: a, b, b' and c.

Its subcellular location is the plastid. It localises to the chloroplast thylakoid membrane. It carries out the reaction ATP + H2O + 4 H(+)(in) = ADP + phosphate + 5 H(+)(out). Its function is as follows. Produces ATP from ADP in the presence of a proton gradient across the membrane. The alpha chain is a regulatory subunit. This Calycanthus floridus var. glaucus (Eastern sweetshrub) protein is ATP synthase subunit alpha, chloroplastic.